Reading from the N-terminus, the 452-residue chain is MGDEQDKRTGKEKLLFYTTAFFILLGTFSLFAFLFLVPFVIEPAFTTIFMQFEEVPALCETYDTEIYYGAKNCSWSSCREGCTKDIYTCTQIRVNYRLNLYNFTDEFNFTEYHINLKEAERILPPVKRTDRYERALRSDYEYDNLGGGTGLDIDLGAGRMEQLNFGDADGSNGYLIEDSEDTRGLSASGTLISDERRPFDEISELNEGLMGNRSMYYYVGARLFPNVKGCGYPPMLNCTIWLKRYTKIGMKFPCYYSKVDPSLVISDLDYWQNTLNLVYSMAIPIPSFIISVIYLTYAYFKIYNEDEETAPLDKNAEDMDIDDIDAVDDSDGAVLADNVAGSQIINMDSTTNDSCLEGVLPNGGPGMTASISQGGSVTTPGPYIAQSPAGSQMTPNSEINSFGHQLKVQMADELSRDSLENGAISTSNSVQGNLSKTMTTSISTPPGPTAAV.

The Cytoplasmic portion of the chain corresponds to methionine 1–alanine 20. A helical membrane pass occupies residues phenylalanine 21–isoleucine 41. Over glutamate 42–threonine 274 the chain is Extracellular. N-linked (GlcNAc...) asparagine glycans are attached at residues asparagine 72, asparagine 102, asparagine 108, asparagine 212, and asparagine 237. Residues leucine 275–leucine 295 form a helical membrane-spanning segment. Over threonine 296–valine 452 the chain is Cytoplasmic. Residues alanine 423–threonine 444 show a composition bias toward polar residues. Residues alanine 423 to valine 452 are disordered.

As to expression, preferentially expressed in the central nervous system of developing embryos, weaker expression is seen in the peripheral nervous system. In pupae and adults, expression is seen predominantly in heads, body and legs.

It localises to the membrane. Its function is as follows. Enhances para sodium channel function. Required during pupal development to rescue adult paralysis and also protects adult flies against heat-induced lethality. The chain is Protein tipE (tipE) from Drosophila melanogaster (Fruit fly).